The chain runs to 220 residues: Zip homologous protein 1 (220 aa).

The RING-type zinc-finger motif lies at 6-44 (CNGCGCSPSKRQFFITACSHVFCETCRTTPTADFCHLCK). Residues 124 to 155 (LTSFEENNRKKLEDIERENEKLRNLISALELK) adopt a coiled-coil conformation. Disordered regions lie at residues 166 to 186 (EFFMQGTPTSSNPSVAGSDVD) and 201 to 220 (RSDSSSSNCSSQSNRGGSLF). The span at 171 to 180 (GTPTSSNPSV) shows a compositional bias: polar residues.

In terms of assembly, interacts with zhp-2; the interaction is required for their chromosome association and stability. As to expression, expressed in the germline.

It localises to the chromosome. Functionally, recruited co-dependently with zhp-2 to the synaptonemal complex between homologous chromosome pairs to regulate the formation and number of crossover events between homologs during meiotic recombination. Together with zhp-2, promotes the accumulation of pro-crossover proteins, including zhp-3 and zhp-4, at a designated crossover site along the recombination intermediate. Limits the number of crossover sites along a recombination intermediate by restricting the association of these pro-crossover proteins with other recombination sites during late prophase. Also, together with zhp-2, plays a role in chromosome remodeling following crossover formation to promote two successive rounds of chromosome segregation during meiosis. In Caenorhabditis elegans, this protein is Zip homologous protein 1.